The following is a 1464-amino-acid chain: Bridge-like lipid transfer protein family member 3B (1464 aa).

Residues 3-94 enclose the Chorein N-terminal domain; sequence GIIKKQILKH…DKVIMEMSTC (92 aa). 2 disordered regions span residues 267–297 and 409–436; these read STEQRKSMAPEPTQSSTVVASAQQVKTTQTS and DHNVGSPPKSPTHASPQHTQTEKDYPLK. Positions 278–297 are enriched in polar residues; sequence PTQSSTVVASAQQVKTTQTS. Phosphoserine occurs at positions 414, 418, 774, 935, and 1009. Disordered regions lie at residues 1066 to 1089, 1164 to 1183, and 1392 to 1413; these read SKEETPPVRTLKSQSSLSGKPKER, LQNYGETSPDAISTNSEGAQ, and QRSVTQATQTSPGVPWPSQSAN. Polar residues-rich tracts occupy residues 1164–1182 and 1394–1413; these read LQNYGETSPDAISTNSEGA and SVTQATQTSPGVPWPSQSAN. The stretch at 1418–1456 forms a coiled coil; that stretch reads SFDFTREQLMEENESLKQELAKAKMALAEAHLEKDALLH.

Monomer. Homodimer (via N-terminus). Associates with the Golgi-associated retrograde protein (GARP) complex. Interacts with GARP complex component VPS52. Interacts (via C-terminal coiled-coil domain) with STX6.

The protein localises to the cytoplasm. It is found in the cytosol. Its subcellular location is the early endosome. In terms of biological role, tube-forming lipid transport protein which mediates the transfer of lipids between membranes at organelle contact sites. Required for retrograde traffic of vesicle clusters in the early endocytic pathway to the Golgi complex. This Homo sapiens (Human) protein is Bridge-like lipid transfer protein family member 3B.